We begin with the raw amino-acid sequence, 237 residues long: Phosphoribosylaminoimidazole-succinocarboxamide synthase (237 aa).

It belongs to the SAICAR synthetase family.

The catalysed reaction is 5-amino-1-(5-phospho-D-ribosyl)imidazole-4-carboxylate + L-aspartate + ATP = (2S)-2-[5-amino-1-(5-phospho-beta-D-ribosyl)imidazole-4-carboxamido]succinate + ADP + phosphate + 2 H(+). It participates in purine metabolism; IMP biosynthesis via de novo pathway; 5-amino-1-(5-phospho-D-ribosyl)imidazole-4-carboxamide from 5-amino-1-(5-phospho-D-ribosyl)imidazole-4-carboxylate: step 1/2. The sequence is that of Phosphoribosylaminoimidazole-succinocarboxamide synthase from Psychrobacter arcticus (strain DSM 17307 / VKM B-2377 / 273-4).